Reading from the N-terminus, the 83-residue chain is MYB-like transcription factor ETC1 (83 aa).

The Myb-like domain occupies 35-72 (AQEEEDLICRMYKLVGERWDLIAGRIPGRTAEEIERFW).

As to expression, expressed in developing trichomes and non-root hair cells.

The protein localises to the nucleus. MYB-type transcription factor involved in epidermal cell fate specification. Acts as a negative regulator of trichome development, by mediating lateral inhibition. Promotes the formation of hair developing cells in H position in root epidermis, probably by inhibiting non-hair cell formation. The sequence is that of MYB-like transcription factor ETC1 (ETC1) from Arabidopsis thaliana (Mouse-ear cress).